The sequence spans 127 residues: Large ribosomal subunit protein bL17 (127 aa).

Belongs to the bacterial ribosomal protein bL17 family. Part of the 50S ribosomal subunit. Contacts protein L32.

This Pelobacter propionicus (strain DSM 2379 / NBRC 103807 / OttBd1) protein is Large ribosomal subunit protein bL17.